A 4080-amino-acid chain; its full sequence is Hybrid PKS-NRPS synthetase poxE (4080 aa).

The region spanning 8 to 442 (REPIAIVGSG…GTNAHAIIEA (435 aa)) is the Ketosynthase family 3 (KS3) domain. Active-site for beta-ketoacyl synthase activity residues include Cys-181, His-320, and His-362. Positions 554-878 (VFTGQGAQWA…QRGMNDVEAM (325 aa)) are malonyl-CoA:ACP transacylase (MAT) domain. An N-terminal hotdog fold region spans residues 944–1078 (HPILGTRCPD…GRLVITYGPV (135 aa)). Residues 944 to 1246 (HPILGTRCPD…AVPLEATNAD (303 aa)) enclose the PKS/mFAS DH domain. Residues 945–1243 (PILGTRCPDG…GIHAVPLEAT (299 aa)) form a dehydratase (DH) domain region. His-976 acts as the Proton acceptor; for dehydratase activity in catalysis. Residues 1093-1246 (MVDVPSERFY…AVPLEATNAD (154 aa)) form a C-terminal hotdog fold region. Residue Asp-1152 is the Proton donor; for dehydratase activity of the active site. The tract at residues 1400–1585 (HFSDYLASVV…GVDTFTSDAD (186 aa)) is methyltransferase (MT) domain. The interval 2118–2292 (TYWLVGLTGS…AGSVMNIGAI (175 aa)) is ketoreductase (KR)domain. Positions 2399-2478 (TTDEIYEVIK…TIGEIIKFVL (80 aa)) are peptidyl carrier protein. Residues 2405-2481 (EVIKECFIVK…EIIKFVLEKL (77 aa)) form the Carrier 1 domain. An O-(pantetheine 4'-phosphoryl)serine modification is found at Ser-2441. The segment at 2488–2569 (SLGLSPPTGA…AASPSIHTEE (82 aa)) is disordered. The span at 2511–2525 (VVVERRNVPRLEKKI) shows a compositional bias: basic and acidic residues. A compositionally biased stretch (low complexity) spans 2528-2545 (SAGSRTSSSVTGTSKSVS). The span at 2551–2565 (DTASSQTSEAASPSI) shows a compositional bias: polar residues. Positions 2607-3036 (KEPLSFGQSR…DSKQPGGHVS (430 aa)) are condensation. The tract at residues 3069-3478 (DMAKQYPQKL…DGRLRIEGRI (410 aa)) is adenylation. A Carrier 2 domain is found at 3593 to 3673 (AHLNEAQAQM…KMALLIKPQE (81 aa)). Residues 3598–3670 (AQAQMVQLWE…TLEKMALLIK (73 aa)) are thiolation. Ser-3633 is modified (O-(pantetheine 4'-phosphoryl)serine). Positions 3740 to 3959 (LTGATGFIGQ…DFVPVEQVVR (220 aa)) are reductase (RED) domain.

This sequence in the C-terminal section; belongs to the NRP synthetase family.

It functions in the pathway secondary metabolite biosynthesis. In terms of biological role, hybrid PKS-NRPS synthetase; part of the gene cluster that mediates the biosynthesis of oxaleimides, cytotoxic compounds containing an unusual disubstituted succinimide moiety. The first step of the pathway is provided by the HR-PKS poxF that serves in a new mode of collaborative biosynthesis with the PKS-NRPS poxE, by providing the olefin containing amino acid substrate via the synthesis of an ACP-bound dec-4-enoate. The cytochrome P450 monooxygenase poxM-catalyzed oxidation at the alpha-position creates the enzyme-bound 2-hydroxydec-4-enoyl-ACP thioester, which may be prone to spontaneous hydrolysis to yield 2-hydroxydec-4-enoic acid due to increased electrophilicity of the carbonyl. 2-hydroxydec-4-enoic acid can then be further oxidized by poxM to yield the alpha-ketoacid 2-oxodec-4-enoicacid, which is reductively aminated by the aminotransferase poxL to yield (S,E)-2-aminodec-4-enoic acid. The Hybrid PKS-NRPS synthetase poxE then performs condensation between the octaketide product of its PKS modules and the amino group of (S,E)-2-aminodec-4-enoic acid which is activated and incorporated by the adenylation domain. The resulting aminoacyl product can be cyclized by the Diels-Alderase PoxQ and reductively released by the reductive (R) domain of poxE to yield an aldehyde intermediate. The released aldehyde is then substrate for a Knoevenagel condensation by the hydrolyase poxO followed by an oxidation at the 5-position of the pyrrolidone ring. The presence of the olefin from the amino acid building block allows for migration of the substituted allyl group to occur. This allylic transposition reaction takes place in a conjugate addition, semipinacol-like fashion to yield a succinimide intermediate. Iterative two-electron oxidations of the C7 methyl of the succinimide intermediate to the carboxylic acid can be catalyzed by one of two remaining cytochrome P450 monooxygenasess poxC or poxD to yield oxaleimide A. Subsequent oxidation yields the maleimide scaffold oxaleimide I. Both oxaleimide A and oxaleimide I can undergo oxidative modifications in the decalin ring to yield the series of products oxaleimides B to H. The sequence is that of Hybrid PKS-NRPS synthetase poxE from Penicillium oxalicum.